A 576-amino-acid chain; its full sequence is MTWELHLLLLLGLGLRSQEALPPPCESQIYCHGELLHQVQMAQLYQDDKQFVDMSLATSPDEVLQKFSELATVHNHSIPKEQLQEFVQSHFQPVGQELQSWTPEDWKDSPQFLQKISDANLRVWAEELHKIWKKLGKKMKAEVLSYPERSSLIYSKHPFIVPGGRFVEFYYWDSYWVMEGLLLSEMASTVKGMLQNFLDLVKTYGHIPNGGRIYYLQRSQPPLLTLMMDRYVAHTKDVAFLQENIGTLASELDFWTVNRTVSVVSGGQSYVLNRYYVPYGGPRPESYRKDAELANSVPEGDRETLWAELKAGAESGWDFSSRWLVGGPDPDLLSSIRTSKMVPADLNAFLCQAEELMSNFYSRLGNDTEATKYRNLRAQRLAAMEAVLWDEQKGAWFDYDLEKGKKNLEFYPSNLSPLWAGCFSDPSVADKALKYLEDSKILTYQYGIPTSLRNTGQQWDFPNAWAPLQDLVIRGLAKSASPRTQEVAFQLAQNWIKTNFKVYSQKSAMFEKYDISNGGHPGGGGEYEVQEGFGWTNGLALMLLDRYGDQLTSGTQLASLGPHCLVAALLLSLLLQ.

An N-terminal signal peptide occupies residues 1–20; it reads MTWELHLLLLLGLGLRSQEA. Asn-75 carries N-linked (GlcNAc...) asparagine glycosylation. Substrate-binding positions include Arg-165, 172 to 173, Asn-209, and 218 to 220; these read WD and RSQ. A glycan (N-linked (GlcNAc...) asparagine) is linked at Asn-258. Residues 283 to 285 and Gly-316 each bind substrate; that span reads RPE. The Proton donor/acceptor role is filled by Asp-318. An N-linked (GlcNAc...) asparagine glycan is attached at Asn-366. Catalysis depends on Glu-511, which acts as the Proton donor/acceptor. Substrate is bound at residue Glu-526. A lipid anchor (GPI-anchor amidated serine) is attached at Ser-553. Positions 554 to 576 are cleaved as a propeptide — removed in mature form; that stretch reads GTQLASLGPHCLVAALLLSLLLQ.

The protein belongs to the glycosyl hydrolase 37 family. Homodimer; disulfide-linked.

The protein resides in the cell membrane. The catalysed reaction is alpha,alpha-trehalose + H2O = alpha-D-glucose + beta-D-glucose. Functionally, intestinal trehalase is probably involved in the hydrolysis of ingested trehalose. In Mus musculus (Mouse), this protein is Trehalase.